Reading from the N-terminus, the 64-residue chain is DNA-binding protein 7b (64 aa).

It belongs to the 7 kDa DNA-binding/endoribonuclease P2 family. In terms of assembly, monomer.

It is found in the cytoplasm. Functionally, can constrain negative DNA supercoils. May be involved in maintaining the integrity of the genome at high temperature. This chain is DNA-binding protein 7b, found in Saccharolobus islandicus (strain HVE10/4) (Sulfolobus islandicus).